The chain runs to 170 residues: Peptide deformylase (170 aa).

Fe cation-binding residues include C93 and H135. Residue E136 is part of the active site. H139 serves as a coordination point for Fe cation.

This sequence belongs to the polypeptide deformylase family. It depends on Fe(2+) as a cofactor.

It carries out the reaction N-terminal N-formyl-L-methionyl-[peptide] + H2O = N-terminal L-methionyl-[peptide] + formate. Functionally, removes the formyl group from the N-terminal Met of newly synthesized proteins. Requires at least a dipeptide for an efficient rate of reaction. N-terminal L-methionine is a prerequisite for activity but the enzyme has broad specificity at other positions. This chain is Peptide deformylase, found in Syntrophobacter fumaroxidans (strain DSM 10017 / MPOB).